Reading from the N-terminus, the 208-residue chain is Nascent polypeptide-associated complex subunit alpha (208 aa).

The segment covering 1 to 19 (MSSSRIEELPDDDVPKTTV) has biased composition (basic and acidic residues). Disordered stretches follow at residues 1-50 (MSSS…HSRN) and 120-166 (QLAA…VFDA). A compositionally biased stretch (acidic residues) spans 21–34 (DAADSSESEVEGAE). An NAC-A/B domain is found at 48–113 (SRNEKKARKA…AKIEDLNSQA (66 aa)). Residues 120 to 131 (QLAAAEAAGSNE) are compositionally biased toward low complexity. A compositionally biased stretch (basic and acidic residues) spans 132–154 (HAGHDHASHDHGKGKAVESADKK). Residues 155–164 (DEEEDDEEVF) show a composition bias toward acidic residues. In terms of domain architecture, UBA spans 169-208 (LEAKDIELVMAQASVSRNKAIKALKENDNDIVNSIMALSV).

The protein belongs to the NAC-alpha family. Part of the nascent polypeptide-associated complex (NAC), consisting of EGD2 and EGD1. NAC associates with ribosomes via EGD1.

It is found in the cytoplasm. The protein localises to the nucleus. Functionally, component of the nascent polypeptide-associated complex (NAC), a dynamic component of the ribosomal exit tunnel, protecting the emerging polypeptides from interaction with other cytoplasmic proteins to ensure appropriate nascent protein targeting. The NAC complex also promotes mitochondrial protein import by enhancing productive ribosome interactions with the outer mitochondrial membrane and blocks the inappropriate interaction of ribosomes translating non-secretory nascent polypeptides with translocation sites in the membrane of the endoplasmic reticulum. EGD2 may also be involved in transcription regulation. The polypeptide is Nascent polypeptide-associated complex subunit alpha (EGD2) (Ajellomyces capsulatus (strain NAm1 / WU24) (Darling's disease fungus)).